The chain runs to 282 residues: tRNA (guanine-N(1)-)-methyltransferase (282 aa).

The interval 77–114 (TGPAATVSDLESSAEHKRNLRPATTNGDAEPLGEKAGG) is disordered. S-adenosyl-L-methionine-binding positions include G149 and 173–178 (IGDYVL).

Belongs to the RNA methyltransferase TrmD family. In terms of assembly, homodimer.

The protein resides in the cytoplasm. The catalysed reaction is guanosine(37) in tRNA + S-adenosyl-L-methionine = N(1)-methylguanosine(37) in tRNA + S-adenosyl-L-homocysteine + H(+). Functionally, specifically methylates guanosine-37 in various tRNAs. The sequence is that of tRNA (guanine-N(1)-)-methyltransferase from Corynebacterium jeikeium (strain K411).